Reading from the N-terminus, the 119-residue chain is Aspartate 1-decarboxylase (119 aa).

S25 serves as the catalytic Schiff-base intermediate with substrate; via pyruvic acid. Position 25 is a pyruvic acid (Ser) (S25). Substrate is bound at residue T57. The active-site Proton donor is the Y58. 73-75 (GAA) is a substrate binding site.

It belongs to the PanD family. Heterooctamer of four alpha and four beta subunits. It depends on pyruvate as a cofactor. Is synthesized initially as an inactive proenzyme, which is activated by self-cleavage at a specific serine bond to produce a beta-subunit with a hydroxyl group at its C-terminus and an alpha-subunit with a pyruvoyl group at its N-terminus.

The protein resides in the cytoplasm. The enzyme catalyses L-aspartate + H(+) = beta-alanine + CO2. Its pathway is cofactor biosynthesis; (R)-pantothenate biosynthesis; beta-alanine from L-aspartate: step 1/1. Catalyzes the pyruvoyl-dependent decarboxylation of aspartate to produce beta-alanine. This Thermosipho melanesiensis (strain DSM 12029 / CIP 104789 / BI429) protein is Aspartate 1-decarboxylase.